A 340-amino-acid chain; its full sequence is Protein HP_1247 (340 aa).

In terms of assembly, seems to interact with H.pylori HolB.

Its function is as follows. Could be the functional equivalent of DNA polymerase III delta subunit (HolA). The protein is Protein HP_1247 of Helicobacter pylori (strain ATCC 700392 / 26695) (Campylobacter pylori).